The chain runs to 855 residues: Cytosolic phospholipase A2 zeta (855 aa).

Positions 27 to 145 (EKSEPQWKHR…QLGQPCTKNF (119 aa)) constitute a C2 domain. 5 residues coordinate Ca(2+): Asp-60, Asp-66, Asp-116, Asp-118, and Asp-123. One can recognise a PLA2c domain in the interval 304–855 (MSSSGDLDLR…RRQAGGRVGG (552 aa)). Ser-393 acts as the Nucleophile in catalysis. The active-site Proton acceptor is the Asp-685.

Ca(2+) is required as a cofactor. In terms of tissue distribution, strongly expressed in thyroid, expressed at intermediate level in stomach and at very low level in large intestine and prostate.

The protein resides in the cytoplasm. It localises to the cytosol. Its subcellular location is the cell membrane. It is found in the mitochondrion. It carries out the reaction a 1,2-diacyl-sn-glycero-3-phosphocholine + H2O = a 1-acyl-sn-glycero-3-phosphocholine + a fatty acid + H(+). The enzyme catalyses a 1-O-alkyl-2-acyl-sn-glycero-3-phosphocholine + H2O = a 1-O-alkyl-sn-glycero-3-phosphocholine + a fatty acid + H(+). The catalysed reaction is 1-hexadecanoyl-2-(9Z-octadecenoyl)-sn-glycero-3-phosphocholine + H2O = 2-(9Z-octadecenoyl)-sn-glycero-3-phosphocholine + hexadecanoate + H(+). It catalyses the reaction 1-hexadecanoyl-2-(9Z,12Z-octadecadienoyl)-sn-glycero-3-phosphocholine + H2O = (9Z,12Z)-octadecadienoate + 1-hexadecanoyl-sn-glycero-3-phosphocholine + H(+). It carries out the reaction 1-hexadecanoyl-2-(5Z,8Z,11Z,14Z-eicosatetraenoyl)-sn-glycero-3-phosphocholine + H2O = 1-hexadecanoyl-sn-glycero-3-phosphocholine + (5Z,8Z,11Z,14Z)-eicosatetraenoate + H(+). The enzyme catalyses 1-hexadecanoyl-2-(9Z,12Z-octadecadienoyl)-sn-glycero-3-phosphoethanolamine + H2O = 1-hexadecanoyl-sn-glycero-3-phosphoethanolamine + (9Z,12Z)-octadecadienoate + H(+). The catalysed reaction is 1-hexadecanoyl-2-(5Z,8Z,11Z,14Z-eicosatetraenoyl)-sn-glycero-3-phosphoethanolamine + H2O = 1-hexadecanoyl-sn-glycero-3-phosphoethanolamine + (5Z,8Z,11Z,14Z)-eicosatetraenoate + H(+). It catalyses the reaction 1-(5Z,8Z,11Z,14Z-eicosatetraenoyl)-2-O-hexadecyl-sn-glycero-3-phosphocholine + H2O = 2-O-hexadecyl-sn-glycero-3-phosphocholine + (5Z,8Z,11Z,14Z)-eicosatetraenoate + H(+). It carries out the reaction 1-O-hexadecyl-2-(5Z,8Z,11Z,14Z)-eicosatetraenoyl-sn-glycero-3-phosphocholine + H2O = 1-O-hexadecyl-sn-glycero-3-phosphocholine + (5Z,8Z,11Z,14Z)-eicosatetraenoate + H(+). The enzyme catalyses 1-hexadecanoyl-sn-glycero-3-phosphocholine + H2O = sn-glycerol 3-phosphocholine + hexadecanoate + H(+). Stimulated by cytosolic Ca(2+). Its function is as follows. Has calcium-dependent phospholipase and lysophospholipase activities with a potential role in membrane lipid remodeling and biosynthesis of lipid mediators. Preferentially hydrolyzes the ester bond of the fatty acyl group attached at sn-2 position of phospholipids (phospholipase A2 activity). Selectively hydrolyzes sn-2 arachidonoyl group from membrane phospholipids, providing the precursor for eicosanoid biosynthesis. In myocardial mitochondria, plays a major role in arachidonate release that is metabolically channeled to the formation of cardioprotective eicosanoids, epoxyeicosatrienoates (EETs). This chain is Cytosolic phospholipase A2 zeta (Pla2g4f), found in Mus musculus (Mouse).